A 376-amino-acid chain; its full sequence is UDP-4-amino-4,6-dideoxy-N-acetyl-beta-L-altrosamine transaminase (376 aa).

Substrate contacts are provided by residues Tyr4, 24–27 (EILT), Ala54, and Ser176. Lys181 carries the post-translational modification N6-(pyridoxal phosphate)lysine. Residues Asn226 and 311-314 (QVHY) each bind substrate.

Belongs to the DegT/DnrJ/EryC1 family.

It carries out the reaction UDP-4-amino-4,6-dideoxy-N-acetyl-beta-L-altrosamine + 2-oxoglutarate = UDP-2-acetamido-2,6-dideoxy-beta-L-arabino-hex-4-ulose + L-glutamate. In terms of biological role, catalyzes the second step in the biosynthesis of pseudaminic acid, a sialic-acid-like sugar that is used to modify flagellin. Uses UDP-2-acetamido-2,6-dideoxy-beta-L-arabino-4-hexulose as substrate producing UDP-4-amino-4,6-dideoxy-beta-L-AltNAc. This chain is UDP-4-amino-4,6-dideoxy-N-acetyl-beta-L-altrosamine transaminase (pseC), found in Campylobacter jejuni subsp. jejuni serotype O:23/36 (strain 81-176).